We begin with the raw amino-acid sequence, 115 residues long: Phosphoribosyl-AMP cyclohydrolase (115 aa).

Asp-80 lines the Mg(2+) pocket. A Zn(2+)-binding site is contributed by Cys-81. Positions 82 and 84 each coordinate Mg(2+). Zn(2+)-binding residues include Cys-97 and Cys-104.

Belongs to the PRA-CH family. As to quaternary structure, homodimer. The cofactor is Mg(2+). Requires Zn(2+) as cofactor.

The protein localises to the cytoplasm. It catalyses the reaction 1-(5-phospho-beta-D-ribosyl)-5'-AMP + H2O = 1-(5-phospho-beta-D-ribosyl)-5-[(5-phospho-beta-D-ribosylamino)methylideneamino]imidazole-4-carboxamide. It participates in amino-acid biosynthesis; L-histidine biosynthesis; L-histidine from 5-phospho-alpha-D-ribose 1-diphosphate: step 3/9. Functionally, catalyzes the hydrolysis of the adenine ring of phosphoribosyl-AMP. This Mycolicibacterium gilvum (strain PYR-GCK) (Mycobacterium gilvum (strain PYR-GCK)) protein is Phosphoribosyl-AMP cyclohydrolase.